The primary structure comprises 149 residues: Deoxyuridine 5'-triphosphate nucleotidohydrolase (149 aa).

Residues 68-70 (RSG), N81, 85-87 (LID), and M95 contribute to the substrate site.

The protein belongs to the dUTPase family. Mg(2+) serves as cofactor.

The enzyme catalyses dUTP + H2O = dUMP + diphosphate + H(+). The protein operates within pyrimidine metabolism; dUMP biosynthesis; dUMP from dCTP (dUTP route): step 2/2. This enzyme is involved in nucleotide metabolism: it produces dUMP, the immediate precursor of thymidine nucleotides and it decreases the intracellular concentration of dUTP so that uracil cannot be incorporated into DNA. This chain is Deoxyuridine 5'-triphosphate nucleotidohydrolase, found in Bordetella bronchiseptica (strain ATCC BAA-588 / NCTC 13252 / RB50) (Alcaligenes bronchisepticus).